A 202-amino-acid polypeptide reads, in one-letter code: LexA repressor (202 aa).

Residues 28 to 48 (RAEIASRLGFRSPNAAEEHLK) constitute a DNA-binding region (H-T-H motif). Catalysis depends on for autocatalytic cleavage activity residues Ser-119 and Lys-156.

The protein belongs to the peptidase S24 family. In terms of assembly, homodimer.

It catalyses the reaction Hydrolysis of Ala-|-Gly bond in repressor LexA.. Its function is as follows. Represses a number of genes involved in the response to DNA damage (SOS response), including recA and lexA. Binds to the 16 bp palindromic sequence 5'-CTGTATATATATACAG-3'. In the presence of single-stranded DNA, RecA interacts with LexA causing an autocatalytic cleavage which disrupts the DNA-binding part of LexA, leading to derepression of the SOS regulon and eventually DNA repair. In Sodalis glossinidius (strain morsitans), this protein is LexA repressor.